A 33-amino-acid polypeptide reads, in one-letter code: Cytochrome b6-f complex subunit 8 (33 aa).

A helical transmembrane segment spans residues 2–22; that stretch reads LITLGWASLAALFSFSIAMVV.

This sequence belongs to the PetN family. The 4 large subunits of the cytochrome b6-f complex are cytochrome b6, subunit IV (17 kDa polypeptide, PetD), cytochrome f and the Rieske protein, while the 4 small subunits are PetG, PetL, PetM and PetN. The complex functions as a dimer.

The protein localises to the plastid. The protein resides in the organellar chromatophore thylakoid membrane. Component of the cytochrome b6-f complex, which mediates electron transfer between photosystem II (PSII) and photosystem I (PSI), cyclic electron flow around PSI, and state transitions. This chain is Cytochrome b6-f complex subunit 8, found in Paulinella chromatophora.